The primary structure comprises 1332 residues: MRNLKLFRTLEFRDIQGPGNPQCFSLRTEQGTVLIGSEHGLIEVDPVSREVKNEVSLVAEGFLPEDGSGRIVGVQDLLDQESVCVATASGDVILCSLSTQQLECVGSVASGISVMSWSPDQELVLLATGQQTLIMMTKDFEPILEQQIHQDDFGESKFITVGWGRKETQFHGSEGRQAAFQMQMHESALPWDDHRPQVTWRGDGQFFAVSVVCPETGARKVRVWNREFALQSTSEPVAGLGPALAWKPSGSLIASTQDKPNQQDIVFFEKNGLLHGHFTLPFLKDEVKVNDLLWNADSSVLAVWLEDLQREESSIPKTCVQLWTVGNYHWYLKQSLSFSTCGKSKIVSLMWDPVTPYRLHVLCQGWHYLAYDWHWTTDRSVGDNSSDLSNVAVIDGNRVLVTVFRQTVVPPPMCTYQLLFPHPVNQVTFLAHPQKSNDLAVLDASNQISVYKCGDCPSADPTVKLGAVGGSGFKVCLRTPHLEKRYKIQFENNEDQDVNPLKLGLLTWIEEDVFLAVSHSEFSPRSVIHHLTAASSEMDEEHGQLNVSSSAAVDGVIISLCCNSKTKSVVLQLADGQIFKYLWESPSLAIKPWKNSGGFPVRFPYPCTQTELAMIGEEECVLGLTDRCRFFINDIEVASNITSFAVYDEFLLLTTHSHTCQCFCLRDASFKTLQAGLSSNHVSHGEVLRKVERGSRIVTVVPQDTKLVLQMPRGNLEVVHHRALVLAQIRKWLDKLMFKEAFECMRKLRINLNLIYDHNPKVFLGNVETFIKQIDSVNHINLFFTELKEEDVTKTMYPAPVTSSVYLSRDPDGNKIDLVCDAMRAVMESINPHKYCLSILTSHVKKTTPELEIVLQKVHELQGNAPSDPDAVSAEEALKYLLHLVDVNELYDHSLGTYDFDLVLMVAEKSQKDPKEYLPFLNTLKKMETNYQRFTIDKYLKRYEKAIGHLSKCGPEYFPECLNLIKDKNLYNEALKLYSPSSQQYQDISIAYGEHLMQEHMYEPAGLMFARCGAHEKALSAFLTCGNWKQALCVAAQLNFTKDQLVGLGRTLAGKLVEQRKHIDAAMVLEECAQDYEEAVLLLLEGAAWEEALRLVYKYNRLDIIETNVKPSILEAQKNYMAFLDSQTATFSRHKKRLLVVRELKEQAQQAGLDDEVPHGQESDLFSETSSVVSGSEMSGKYSHSNSRISARSSKNRRKAERKKHSLKEGSPLEDLALLEALSEVVQNTENLKDEVYHILKVLFLFEFDEQGRELQKAFEDTLQLMERSLPEIWTLTYQQNSATPVLGPNSTANSIMASYQQQKTSVPVLDAELFIPPKINRRTQWKLSLLD.

A phosphoserine mark is found at S471, S804, S867, S1171, and S1174. A mediates dimerization region spans residues V885–D1332. A disordered region spans residues Q1150 to K1208. The segment covering D1164–E1177 has biased composition (polar residues). Positions A1191–E1209 are required for binding to tRNA. Basic residues predominate over residues S1194–S1206.

This sequence belongs to the ELP1/IKA1 family. As to quaternary structure, homodimer; dimerization promotes ELP1 stability and elongator complex formation. Component of the elongator complex which consists of ELP1, ELP2, ELP3, ELP4, ELP5 and ELP6. Interacts preferentially with MAP3K14/NIK followed by IKK-alpha and IKK-beta.

The protein resides in the cytoplasm. The protein localises to the nucleus. The protein operates within tRNA modification; 5-methoxycarbonylmethyl-2-thiouridine-tRNA biosynthesis. Its function is as follows. Component of the elongator complex which is required for multiple tRNA modifications, including mcm5U (5-methoxycarbonylmethyl uridine), mcm5s2U (5-methoxycarbonylmethyl-2-thiouridine), and ncm5U (5-carbamoylmethyl uridine). The elongator complex catalyzes the formation of carboxymethyluridine in the wobble base at position 34 in tRNAs. Regulates the migration and branching of projection neurons in the developing cerebral cortex, through a process depending on alpha-tubulin acetylation. ELP1 binds to tRNA, mediating interaction of the elongator complex with tRNA. May act as a scaffold protein that assembles active IKK-MAP3K14 complexes (IKKA, IKKB and MAP3K14/NIK). The polypeptide is Elongator complex protein 1 (Homo sapiens (Human)).